The primary structure comprises 254 residues: 3-deoxy-manno-octulosonate cytidylyltransferase (254 aa).

The protein belongs to the KdsB family.

Its subcellular location is the cytoplasm. It carries out the reaction 3-deoxy-alpha-D-manno-oct-2-ulosonate + CTP = CMP-3-deoxy-beta-D-manno-octulosonate + diphosphate. Its pathway is nucleotide-sugar biosynthesis; CMP-3-deoxy-D-manno-octulosonate biosynthesis; CMP-3-deoxy-D-manno-octulosonate from 3-deoxy-D-manno-octulosonate and CTP: step 1/1. It functions in the pathway bacterial outer membrane biogenesis; lipopolysaccharide biosynthesis. In terms of biological role, activates KDO (a required 8-carbon sugar) for incorporation into bacterial lipopolysaccharide in Gram-negative bacteria. In Bordetella parapertussis (strain 12822 / ATCC BAA-587 / NCTC 13253), this protein is 3-deoxy-manno-octulosonate cytidylyltransferase.